The sequence spans 411 residues: MFHPRARTMLLLSLPALIIGVASSLVLIAAMKVASVFQQFLWQRLPTSIGIAYDSPFWIVGMLTLTGIVVGLIIRYSPGHAGPDPAIEPLISMPVSPSALPGLLLALIIGLAGGVSLGPEHPIMTINIALAAAFGSRLFPRITALDWTILASAGTIGALFGTPVAAALIFSQTLSGSNDIPMWDRLFAPLMAAAAGSLTTSLFFHPHFSLPIAHYTQMRLVDIASGAIVAAIAIAAGMVAVWCLPRLHELLHRLKNPVLILGIGGFILGILGVIGGPLTLFKGLDEMQQMAFSQTLGAGDYFTLAVVKLAALVIAAASGFRGGRIFPAVFIGAALGLMLHAHVEAVPAAITVSCAILGLVLVVTRDGWLSLFMAAVVVPDTNLLPLLCIVMLPAWLLLAGKPLLAANRHEP.

A run of 11 helical transmembrane segments spans residues 9–29 (MLLLSLPALIIGVASSLVLIA), 54–74 (DSPFWIVGMLTLTGIVVGLII), 99–119 (ALPGLLLALIIGLAGGVSLGP), 149–169 (ILASAGTIGALFGTPVAAALI), 186–206 (LFAPLMAAAAGSLTTSLFFHP), 223–243 (IASGAIVAAIAIAAGMVAVWC), 258–278 (VLILGIGGFILGILGVIGGPL), 296–316 (LGAGDYFTLAVVKLAALVIAA), 322–342 (GGRIFPAVFIGAALGLMLHAH), 343–363 (VEAVPAAITVSCAILGLVLVV), and 386–406 (LLCIVMLPAWLLLAGKPLLAA).

It belongs to the chloride channel (TC 2.A.49) family.

The protein resides in the cell membrane. The polypeptide is Putative ion-transport protein YfeO (Salmonella agona (strain SL483)).